A 526-amino-acid chain; its full sequence is Acetyl-CoA hydrolase (526 aa).

The residue at position 2 (threonine 2) is an N-acetylthreonine. Position 277–281 (277–281 (GIGNI)) interacts with CoA. Catalysis depends on glutamate 302, which acts as the 5-glutamyl coenzyme A thioester intermediate. The residue at position 350 (serine 350) is a Phosphoserine. CoA contacts are provided by asparagine 392 and glycine 396.

It belongs to the acetyl-CoA hydrolase/transferase family. In terms of assembly, monomer. In terms of processing, glycosylated; contains mannose.

The protein resides in the cytoplasm. The catalysed reaction is acetyl-CoA + H2O = acetate + CoA + H(+). Its function is as follows. Presumably involved in regulating the intracellular acetyl-CoA pool for fatty acid and cholesterol synthesis and fatty acid oxidation. It may be involved in overall regulation of acetylation during melatonin synthesis. The sequence is that of Acetyl-CoA hydrolase (ACH1) from Saccharomyces cerevisiae (strain ATCC 204508 / S288c) (Baker's yeast).